The following is a 201-amino-acid chain: Flagellin B1 (201 aa).

The propeptide occupies 1 to 11 (MFEQNDDRDRG).

This sequence belongs to the archaeal flagellin family.

The protein resides in the archaeal flagellum. Flagellin is the subunit protein which polymerizes to form the filaments of archaeal flagella. This chain is Flagellin B1 (flaB1), found in Natrialba magadii (strain ATCC 43099 / DSM 3394 / CCM 3739 / CIP 104546 / IAM 13178 / JCM 8861 / NBRC 102185 / NCIMB 2190 / MS3) (Natronobacterium magadii).